A 167-amino-acid chain; its full sequence is Leptin (167 aa).

Positions 1 to 21 (MRCGPLYQFLWLWPYLSYVEA) are cleaved as a signal peptide. An intrachain disulfide couples Cys117 to Cys167.

The protein belongs to the leptin family.

The protein resides in the secreted. Functionally, key player in the regulation of energy balance and body weight control. Once released into the circulation, has central and peripheral effects by binding LEPR, found in many tissues, which results in the activation of several major signaling pathways. In the hypothalamus, acts as an appetite-regulating factor that induces a decrease in food intake and an increase in energy consumption by inducing anorexinogenic factors and suppressing orexigenic neuropeptides, also regulates bone mass and secretion of hypothalamo-pituitary-adrenal hormones. In the periphery, increases basal metabolism, influences reproductive function, regulates pancreatic beta-cell function and insulin secretion, is pro-angiogenic for endothelial cell and affects innate and adaptive immunity. In the arcuate nucleus of the hypothalamus, activates by depolarization POMC neurons inducing FOS and SOCS3 expression to release anorexigenic peptides and inhibits by hyperpolarization NPY neurons inducing SOCS3 with a consequent reduction on release of orexigenic peptides. In addition to its known satiety inducing effect, has a modulatory role in nutrient absorption. In the intestine, reduces glucose absorption by enterocytes by activating PKC and leading to a sequential activation of p38, PI3K and ERK signaling pathways which exerts an inhibitory effect on glucose absorption. Acts as a growth factor on certain tissues, through the activation of different signaling pathways increases expression of genes involved in cell cycle regulation such as CCND1, via JAK2-STAT3 pathway, or VEGFA, via MAPK1/3 and PI3K-AKT1 pathways. May also play an apoptotic role via JAK2-STAT3 pathway and up-regulation of BIRC5 expression. Pro-angiogenic, has mitogenic activity on vascular endothelial cells and plays a role in matrix remodeling by regulating the expression of matrix metalloproteinases (MMPs) and tissue inhibitors of metalloproteinases (TIMPs). In innate immunity, modulates the activity and function of neutrophils by increasing chemotaxis and the secretion of oxygen radicals. Increases phagocytosis by macrophages and enhances secretion of pro-inflammatory mediators. Increases cytotoxic ability of NK cells. Plays a pro-inflammatory role, in synergy with IL1B, by inducing NOS2 which promotes the production of IL6, IL8 and Prostaglandin E2, through a signaling pathway that involves JAK2, PI3K, MAP2K1/MEK1 and MAPK14/p38. In adaptive immunity, promotes the switch of memory T-cells towards T helper-1 cell immune responses. Increases CD4(+)CD25(-) T-cell proliferation and reduces autophagy during TCR (T-cell receptor) stimulation, through MTOR signaling pathway activation and BCL2 up-regulation. The polypeptide is Leptin (LEP) (Bubalus bubalis (Domestic water buffalo)).